The primary structure comprises 146 residues: Hemoglobin subunit beta-1 (146 aa).

In terms of domain architecture, Globin spans 2–146; sequence GLTAHDRQLI…IADALGKGYH (145 aa). His63 and His92 together coordinate heme b.

It belongs to the globin family. Heterotetramer of two alpha chains and two beta chains. Red blood cells.

In terms of biological role, involved in oxygen transport from the lung to the various peripheral tissues. This Xenopus borealis (Kenyan clawed frog) protein is Hemoglobin subunit beta-1 (hbb1).